The sequence spans 181 residues: Shikimate kinase (181 aa).

17–22 (GVGKTT) is a binding site for ATP. T21 serves as a coordination point for Mg(2+). 3 residues coordinate substrate: D39, R63, and G85. R122 is an ATP binding site. R141 contributes to the substrate binding site.

Belongs to the shikimate kinase family. As to quaternary structure, monomer. It depends on Mg(2+) as a cofactor.

The protein resides in the cytoplasm. The enzyme catalyses shikimate + ATP = 3-phosphoshikimate + ADP + H(+). It functions in the pathway metabolic intermediate biosynthesis; chorismate biosynthesis; chorismate from D-erythrose 4-phosphate and phosphoenolpyruvate: step 5/7. Functionally, catalyzes the specific phosphorylation of the 3-hydroxyl group of shikimic acid using ATP as a cosubstrate. The chain is Shikimate kinase from Nostoc punctiforme (strain ATCC 29133 / PCC 73102).